The primary structure comprises 99 residues: Putative pterin-4-alpha-carbinolamine dehydratase (99 aa).

The protein belongs to the pterin-4-alpha-carbinolamine dehydratase family.

The catalysed reaction is (4aS,6R)-4a-hydroxy-L-erythro-5,6,7,8-tetrahydrobiopterin = (6R)-L-erythro-6,7-dihydrobiopterin + H2O. This Saccharolobus islandicus (strain M.16.27) (Sulfolobus islandicus) protein is Putative pterin-4-alpha-carbinolamine dehydratase.